A 684-amino-acid chain; its full sequence is uncharacterized protein (684 aa).

Positions 54 to 239 (LKYLYNKKDV…LLFNRDFEVV (186 aa)) constitute a Helicase ATP-binding domain. 67 to 74 (TSTASGKS) contributes to the ATP binding site. The short motif at 181 to 184 (DELH) is the DEVH box element. Residues 264–419 (LLRRLIENLV…YMPVNIKNRF (156 aa)) form the Helicase C-terminal domain.

This sequence belongs to the helicase family.

This is an uncharacterized protein from Methanocaldococcus jannaschii (strain ATCC 43067 / DSM 2661 / JAL-1 / JCM 10045 / NBRC 100440) (Methanococcus jannaschii).